Consider the following 353-residue polypeptide: tRNA-specific 2-thiouridylase MnmA 2 (353 aa).

6–13 (LLSGGVDS) serves as a coordination point for ATP. The interval 92–94 (NPD) is interaction with target base in tRNA. Cys-97 serves as the catalytic Nucleophile. The cysteines at positions 97 and 192 are disulfide-linked. Gly-120 contacts ATP. Positions 142 to 144 (KDQ) are interaction with tRNA. The active-site Cysteine persulfide intermediate is the Cys-192.

The protein belongs to the MnmA/TRMU family.

Its subcellular location is the cytoplasm. It catalyses the reaction S-sulfanyl-L-cysteinyl-[protein] + uridine(34) in tRNA + AH2 + ATP = 2-thiouridine(34) in tRNA + L-cysteinyl-[protein] + A + AMP + diphosphate + H(+). Its function is as follows. Catalyzes the 2-thiolation of uridine at the wobble position (U34) of tRNA, leading to the formation of s(2)U34. The sequence is that of tRNA-specific 2-thiouridylase MnmA 2 from Bacteroides fragilis (strain ATCC 25285 / DSM 2151 / CCUG 4856 / JCM 11019 / LMG 10263 / NCTC 9343 / Onslow / VPI 2553 / EN-2).